A 223-amino-acid chain; its full sequence is Imidazoleglycerol-phosphate dehydratase (223 aa).

The protein belongs to the imidazoleglycerol-phosphate dehydratase family.

The enzyme catalyses D-erythro-1-(imidazol-4-yl)glycerol 3-phosphate = 3-(imidazol-4-yl)-2-oxopropyl phosphate + H2O. It participates in amino-acid biosynthesis; L-histidine biosynthesis; L-histidine from 5-phospho-alpha-D-ribose 1-diphosphate: step 6/9. This Zygosaccharomyces bailii protein is Imidazoleglycerol-phosphate dehydratase (HIS3).